The sequence spans 457 residues: Carboxypeptidase N catalytic chain (457 aa).

Residues 1–23 (MPDLPSAFLPLLLLSKFVTPVTF) form the signal peptide. The Peptidase M14 domain occupies 24–338 (RHHRYDDLVR…EALIQFLEQV (315 aa)). Cysteines 42 and 104 form a disulfide. Positions 86, 89, and 216 each coordinate Zn(2+). An intrachain disulfide couples Cys271 to Cys311. Glu308 acts as the Proton donor/acceptor in catalysis. 3 O-linked (GalNAc...) threonine glycosylation sites follow: Thr400, Thr402, and Thr409. The interval 418 to 457 (SSSQVYPVQRAPGRGQGGRAKQPRTSRKKDPATKRHRGPA) is disordered.

This sequence belongs to the peptidase M14 family. Tetramer of two catalytic chains and two glycosylated inactive chains. It depends on Zn(2+) as a cofactor. In terms of tissue distribution, mainly expressed in liver. Also detected in lung, stomach, intestine, spleen and kidney.

The protein resides in the secreted. The protein localises to the extracellular space. The enzyme catalyses Release of a C-terminal basic amino acid, preferentially lysine.. Its function is as follows. Protects the body from potent vasoactive and inflammatory peptides containing C-terminal Arg or Lys (such as kinins or anaphylatoxins) which are released into the circulation. In Mus musculus (Mouse), this protein is Carboxypeptidase N catalytic chain (Cpn1).